Reading from the N-terminus, the 619-residue chain is Probable ATP-dependent RNA helicase DDX59 (619 aa).

The segment at 1 to 101 is disordered; sequence MFVPRSLKIK…KSFSKTQRWP (101 aa). The segment covering 12-27 has biased composition (basic and acidic residues); the sequence is SSNDDLKSGEAKKSKP. Lys26 is covalently cross-linked (Glycyl lysine isopeptide (Lys-Gly) (interchain with G-Cter in SUMO2)). Polar residues predominate over residues 59-76; the sequence is ASSTNSPSCQLAEVSSTG. Residue Ser64 is modified to Phosphoserine. The span at 79-91 shows a compositional bias: basic and acidic residues; it reads EGVKDSHPSEEPV. The segment at 104 to 133 adopts an HIT-type zinc-finger fold; sequence GEPVCVVCGRYGEYICDKTDEDVCSLECKA. A Phosphoserine modification is found at Ser160. Positions 203 to 231 match the Q motif motif; the sequence is IDFEHCGFPETLNQNLKKSGYEVPTPIQM. The region spanning 234–405 is the Helicase ATP-binding domain; sequence IPVGLLGRDI…DQLLHNPVRI (172 aa). 247-254 serves as a coordination point for ATP; sequence ADTGSGKT. The short motif at 353–356 is the DEAD box element; that stretch reads DEAD. Positions 416–579 constitute a Helicase C-terminal domain; that stretch reads SVRQIILWVE…ILPPQLLNSP (164 aa). Residues 583–594 are compositionally biased toward basic and acidic residues; sequence EQKRKEQQKDRQ. Residues 583 to 603 are disordered; it reads EQKRKEQQKDRQTQNSLVTGA.

The protein belongs to the DEAD box helicase family. DDX59 subfamily. Interacts (via HIT-type zinc finger) with the RUVBL1/RUVBL2 complex in the presence of ADP.

Its subcellular location is the cytoplasm. It is found in the nucleus. The enzyme catalyses ATP + H2O = ADP + phosphate + H(+). This chain is Probable ATP-dependent RNA helicase DDX59 (Ddx59), found in Mus musculus (Mouse).